A 307-amino-acid polypeptide reads, in one-letter code: Shikimate kinase 2, chloroplastic (307 aa).

The N-terminal 60 residues, 1 to 60 (MEARAGLAMQSRAAVGVGAGPGVGRRGRAVIRVGKRPTAASLRVGGPAGPAAAKPLAPLY), are a transit peptide targeting the chloroplast. 101–108 (GMMGSGKS) contacts ATP. Ser-108 contacts Mg(2+). Substrate-binding residues include Asp-126, Arg-151, and Gly-173. Arg-212 contacts ATP. Positions 285 to 307 (HSTSSGPVGDLIVDSQNRRTKAL) are disordered.

The protein belongs to the shikimate kinase family. The cofactor is Mg(2+). As to expression, expressed in panicles.

The protein localises to the plastid. It localises to the chloroplast. The catalysed reaction is shikimate + ATP = 3-phosphoshikimate + ADP + H(+). The protein operates within metabolic intermediate biosynthesis; chorismate biosynthesis; chorismate from D-erythrose 4-phosphate and phosphoenolpyruvate: step 5/7. Catalyzes the specific phosphorylation of the 3-hydroxyl group of shikimic acid using ATP as a cosubstrate. This Oryza sativa subsp. japonica (Rice) protein is Shikimate kinase 2, chloroplastic (SK2).